We begin with the raw amino-acid sequence, 143 residues long: uncharacterized protein (143 aa).

This is an uncharacterized protein from Archaeoglobus fulgidus (strain ATCC 49558 / DSM 4304 / JCM 9628 / NBRC 100126 / VC-16).